Reading from the N-terminus, the 447-residue chain is Trimethylamine monooxygenase (447 aa).

Residues Ser-13, Glu-38, Gln-40, Leu-46, Trp-47, and His-63 each coordinate FAD. Residues Trp-71 and Asn-73 each contribute to the NADP(+) site. Residues Asn-73 and Val-126 each contribute to the FAD site. Residues Tyr-173, Ala-205, Ser-206, Ser-208, and Arg-229 each contribute to the NADP(+) site. Residues Gln-318 and Thr-321 each contribute to the FAD site. Residue Arg-413 participates in NADP(+) binding.

This sequence belongs to the FMO family. Requires FAD as cofactor.

The catalysed reaction is trimethylamine + NADPH + O2 = trimethylamine N-oxide + NADP(+) + H2O. Catalyzes the oxidation of trimethylamine (TMA) to produce trimethylamine N-oxide (TMAO). TMA is the best substrate, but the enzyme can also oxidize methimazole, indole and dimethylamine (DMA). The polypeptide is Trimethylamine monooxygenase (Roseovarius nubinhibens (strain ATCC BAA-591 / DSM 15170 / ISM)).